Consider the following 389-residue polypeptide: Trans-2-enoyl-CoA reductase [NADH] (389 aa).

NAD(+)-binding positions include 47–52, 73–74, 110–111, and 138–139; these read GASTGY, FE, DA, and LA. Substrate is bound at residue tyrosine 224. Tyrosine 234 serves as the catalytic Proton donor. Residues lysine 243 and 272–274 contribute to the NAD(+) site; that span reads LVT.

This sequence belongs to the TER reductase family. As to quaternary structure, monomer.

It catalyses the reaction a 2,3-saturated acyl-CoA + NAD(+) = a (2E)-enoyl-CoA + NADH + H(+). It functions in the pathway lipid metabolism; fatty acid biosynthesis. In terms of biological role, involved in the fatty acid synthesis (FAS II). Catalyzes the reduction of a carbon-carbon double bond in an enoyl moiety that is covalently linked to a coenzyme A (CoA). This chain is Trans-2-enoyl-CoA reductase [NADH], found in Clostridium perfringens (strain 13 / Type A).